Consider the following 500-residue polypeptide: UPF0371 protein SZO_06760 (500 aa).

Belongs to the UPF0371 family.

The sequence is that of UPF0371 protein SZO_06760 from Streptococcus equi subsp. zooepidemicus (strain H70).